The following is a 453-amino-acid chain: Aldehyde dehydrogenase, dimeric NADP-preferring (453 aa).

Serine 2 bears the N-acetylserine mark. Lysine 178 is subject to N6-acetyllysine. 188-193 (GNTAVG) contacts NAD(+). Lysine 194 carries the N6-acetyllysine modification. Residues glutamate 210 and cysteine 244 contribute to the active site.

Belongs to the aldehyde dehydrogenase family. As to quaternary structure, homodimer.

Its subcellular location is the cytoplasm. It catalyses the reaction an aldehyde + NAD(+) + H2O = a carboxylate + NADH + 2 H(+). The enzyme catalyses octanal + NAD(+) + H2O = octanoate + NADH + 2 H(+). Its function is as follows. ALDHs play a major role in the detoxification of alcohol-derived acetaldehyde. They are involved in the metabolism of corticosteroids, biogenic amines, neurotransmitters, and lipid peroxidation. Oxidizes medium and long chain aldehydes into non-toxic fatty acids. Preferentially oxidizes aromatic aldehyde substrates. Comprises about 50 percent of corneal epithelial soluble proteins. May play a role in preventing corneal damage caused by ultraviolet light. This is Aldehyde dehydrogenase, dimeric NADP-preferring (ALDH3A1) from Canis lupus familiaris (Dog).